The sequence spans 337 residues: Tryptophan--tRNA ligase (337 aa).

ATP contacts are provided by residues 11-13 (QPT) and 19-20 (GN). Positions 12-20 (PTGALHLGN) match the 'HIGH' region motif. An L-tryptophan-binding site is contributed by aspartate 135. ATP is bound by residues 147-149 (GED), valine 191, and 200-204 (KMSKS). The 'KMSKS' region signature appears at 200-204 (KMSKS).

It belongs to the class-I aminoacyl-tRNA synthetase family. Homodimer.

It is found in the cytoplasm. The enzyme catalyses tRNA(Trp) + L-tryptophan + ATP = L-tryptophyl-tRNA(Trp) + AMP + diphosphate + H(+). In terms of biological role, catalyzes the attachment of tryptophan to tRNA(Trp). In Parasynechococcus marenigrum (strain WH8102), this protein is Tryptophan--tRNA ligase.